The chain runs to 401 residues: Putative hetero-Diels-Alderase asR5 (401 aa).

The N-terminal stretch at 1–21 (MRRSFLISAALGLSMSTPALA) is a signal peptide. 4 N-linked (GlcNAc...) asparagine glycosylation sites follow: N71, N77, N240, and N334.

The protein belongs to the eupF Diels-Alderase family.

The protein operates within secondary metabolite biosynthesis; terpenoid biosynthesis. In terms of biological role, putative hetero-Diels-Alderase; part of the gene cluster that mediates the biosynthesis of xenovulene A, an unusual meroterpenoid that has potent inhibitory effects on the human gamma-aminobutyrate A (GABAA) benzodiazepine receptor. The first step of xenovulene A biosynthesis is the biosynthesis of 3-methylorcinaldehyde performed by the non-reducing polyketide synthase aspks1. The salicylate hydroxylase asL1 then catalyzes the oxidative dearomatization of 3-methylorcinaldehyde to yield a dearomatized hydroxycyclohexadione. The 2-oxoglutarate-dependent dioxygenase asL3 further catalyzes the oxidative ring expansion to provide the first tropolone metabolite. The cytochrome P450 monooxygenase asR2 allows the synthesis of tropolone hemiacetal. In parallel, a previously unrecognised class of terpene cyclase, asR6, produces alpha-humulene from farnesylpyrophosphate (FPP). The putative Diels-Alderase asR5 probably catalyzes the formation of the tropolone-humulene skeleton by linking humulene and the polyketide moiety. Oxidative-ring contractions catalyzed by asL4 and asL6 then processively remove carbon atoms from the polyketide to yield xenovulene A. This Sarocladium schorii (Acremonium strictum (strain IMI 501407)) protein is Putative hetero-Diels-Alderase asR5.